Consider the following 225-residue polypeptide: Urease accessory protein UreG (225 aa).

25-32 (GPVGAGKT) contacts GTP.

It belongs to the SIMIBI class G3E GTPase family. UreG subfamily. Homodimer. UreD, UreF and UreG form a complex that acts as a GTP-hydrolysis-dependent molecular chaperone, activating the urease apoprotein by helping to assemble the nickel containing metallocenter of UreC. The UreE protein probably delivers the nickel.

The protein localises to the cytoplasm. Facilitates the functional incorporation of the urease nickel metallocenter. This process requires GTP hydrolysis, probably effectuated by UreG. This Haemophilus influenzae (strain ATCC 51907 / DSM 11121 / KW20 / Rd) protein is Urease accessory protein UreG.